A 211-amino-acid polypeptide reads, in one-letter code: Formate dehydrogenase, cytochrome b556(fdo) subunit (211 aa).

Residues 1–17 are Cytoplasmic-facing; it reads MKRRDTIVRYTAPERIN. Position 18 (histidine 18) interacts with heme b. A helical transmembrane segment spans residues 18-32; that stretch reads HWITAFCFILAAVSG. The Periplasmic portion of the chain corresponds to 33–53; that stretch reads LGFLFPSFNWLMQIMGTPQLA. The chain crosses the membrane as a helical span at residues 54–72; the sequence is RILHPFVGVVMFASFIIMF. Position 57 (histidine 57) interacts with heme b. The Cytoplasmic segment spans residues 73-112; that stretch reads FRYWHHNLINRDDIFWAKNIRKIVVNEEVGDTGRYNFGQK. A helical membrane pass occupies residues 113–130; it reads CVFWAAIIFLVLLLVSGV. Residues 131–151 are Periplasmic-facing; that stretch reads IIWRPYFAPAFSIPVIRFALM. Residues 152–170 form a helical membrane-spanning segment; sequence LHSFAAVALIVVIMVHIYA. Positions 153 and 167 each coordinate heme b. The Cytoplasmic segment spans residues 171–211; sequence ALWVKGTITAMVEGWVTSAWAKKHHPRWYREVRKTTEKKAE.

It belongs to the formate dehydrogenase gamma subunit family. Formate dehydrogenase is a membrane-bound complex, formed by subunits alpha, beta and gamma. The cofactor is heme.

It is found in the cell inner membrane. Its function is as follows. Allows to use formate as major electron donor during aerobic respiration. Subunit gamma is probably the cytochrome b556(FDO) component of the formate dehydrogenase. This chain is Formate dehydrogenase, cytochrome b556(fdo) subunit (fdoI), found in Escherichia coli O157:H7.